A 482-amino-acid polypeptide reads, in one-letter code: Ubiquitin carboxyl-terminal hydrolase MINDY-1 (482 aa).

A disordered region spans residues 1-119; the sequence is MEQPQAECPA…RPQQLPQSPR (119 aa). Residues 21–66 show a composition bias toward basic and acidic residues; the sequence is ESEKHEALSGPEKHPQDKDGADAAPEKHPQDKDGADAHGEAGKQKS. A compositionally biased stretch (pro residues) spans 82–94; that stretch reads CPPPEASSSPPGP. Residues 106-119 show a composition bias toward polar residues; sequence EACSRPQQLPQSPR. Phosphoserine is present on Ser-117. Cys-151 serves as the catalytic Nucleophile. The Proton acceptor role is filled by His-333. The interval 402–441 is ubiquitin-binding domain (UBD); it reads QVDQDYLIALSLQQQQQPQGMLGLSDLELAQQLQQEEYQQ. Residues 437–446 are compositionally biased toward low complexity; sequence EEYQQQQAVQ. Positions 437-482 are disordered; that stretch reads EEYQQQQAVQPVRTRAPSSPGRGATSGRPAGERRQRSKTESDCVLL. The residue at position 454 (Ser-454) is a Phosphoserine. Over residues 466 to 482 the composition is skewed to basic and acidic residues; it reads AGERRQRSKTESDCVLL.

This sequence belongs to the MINDY deubiquitinase family. FAM63 subfamily.

The catalysed reaction is Thiol-dependent hydrolysis of ester, thioester, amide, peptide and isopeptide bonds formed by the C-terminal Gly of ubiquitin (a 76-residue protein attached to proteins as an intracellular targeting signal).. In terms of biological role, hydrolase that can specifically remove 'Lys-48'-linked conjugated ubiquitin from proteins. Has exodeubiquitinase activity and has a preference for long polyubiquitin chains. May play a regulatory role at the level of protein turnover. The sequence is that of Ubiquitin carboxyl-terminal hydrolase MINDY-1 (Mindy1) from Rattus norvegicus (Rat).